The chain runs to 825 residues: Probable inorganic carbon transporter subunit DabA (825 aa).

Positions 334, 336, 521, and 536 each coordinate Zn(2+).

Belongs to the inorganic carbon transporter (TC 9.A.2) DabA family. In terms of assembly, forms a complex with DabB. Zn(2+) serves as cofactor.

It localises to the cell inner membrane. Part of an energy-coupled inorganic carbon pump. The protein is Probable inorganic carbon transporter subunit DabA of Acidithiobacillus ferrooxidans (strain ATCC 23270 / DSM 14882 / CIP 104768 / NCIMB 8455) (Ferrobacillus ferrooxidans (strain ATCC 23270)).